A 448-amino-acid polypeptide reads, in one-letter code: MVMSRIRDTIARPFQNLTALEKVVQWLRLGTTLLIISFGLALTVGPLSSPRTLYMSRLDTYSADITTGLFTVLRESMEQSTSTEENNGVGLTTSELYILTAYTESQIKNVPQYITVSLYGRCDSTYTMVEVFDSEGNMHSVKNSTTKSTCSSIGTDYLFDYREVLESLGLDIILDYAYNKIGSQQAESSAYTTYMRSLKHKKANVLHLLYAVISFQVCMLFFMIWYYYIKGRFMNALKERALVHINSLLSLVVFIGGLISSISLAWVNYTIQSRINTELEAFGFSYHLGVTWFALLWCFAGLISVSCLAWSGLEWCISDNGTSYGGGIDDKFLGYQAGVFTDADLDDETSYSQRYPQRQSTSGEAELMRNSDTMATIRKTSDVDLNSENDANTSLDHGNPTANISNGGKHEPFATREEFELQDIRFRSSNDSEESMQRVIKPSSALQF.

The Cytoplasmic segment spans residues 1–28; that stretch reads MVMSRIRDTIARPFQNLTALEKVVQWLR. The chain crosses the membrane as a helical span at residues 29–49; it reads LGTTLLIISFGLALTVGPLSS. At 50-204 the chain is on the extracellular side; that stretch reads PRTLYMSRLD…MRSLKHKKAN (155 aa). The chain crosses the membrane as a helical span at residues 205–225; that stretch reads VLHLLYAVISFQVCMLFFMIW. Residues 226–246 are Cytoplasmic-facing; that stretch reads YYYIKGRFMNALKERALVHIN. The helical transmembrane segment at 247 to 267 threads the bilayer; the sequence is SLLSLVVFIGGLISSISLAWV. At 268–287 the chain is on the extracellular side; that stretch reads NYTIQSRINTELEAFGFSYH. The chain crosses the membrane as a helical span at residues 288 to 308; it reads LGVTWFALLWCFAGLISVSCL. Over 309–448 the chain is Cytoplasmic; that stretch reads AWSGLEWCIS…VIKPSSALQF (140 aa). 2 stretches are compositionally biased toward polar residues: residues 351–363 and 383–406; these read YSQR…STSG and VDLN…NISN. Disordered stretches follow at residues 351-411 and 427-448; these read YSQR…GKHE and RSSN…ALQF.

It is found in the membrane. Its function is as follows. May be involved in cell wall organization and biogenesis. This is Protein ECM7 (ECM7) from Saccharomyces cerevisiae (strain ATCC 204508 / S288c) (Baker's yeast).